The chain runs to 906 residues: Protein translocase subunit SecA (906 aa).

Residues glutamine 87, 105–109 (GEGKT), and aspartate 512 each bind ATP. The tract at residues 879-906 (REGEKIGRNDPCPCGSGQKYKQCHGKLS) is disordered. The Zn(2+) site is built by cysteine 890, cysteine 892, cysteine 901, and histidine 902.

It belongs to the SecA family. As to quaternary structure, monomer and homodimer. Part of the essential Sec protein translocation apparatus which comprises SecA, SecYEG and auxiliary proteins SecDF-YajC and YidC. Zn(2+) is required as a cofactor.

It is found in the cell inner membrane. The protein resides in the cytoplasm. The enzyme catalyses ATP + H2O + cellular proteinSide 1 = ADP + phosphate + cellular proteinSide 2.. Part of the Sec protein translocase complex. Interacts with the SecYEG preprotein conducting channel. Has a central role in coupling the hydrolysis of ATP to the transfer of proteins into and across the cell membrane, serving both as a receptor for the preprotein-SecB complex and as an ATP-driven molecular motor driving the stepwise translocation of polypeptide chains across the membrane. This is Protein translocase subunit SecA from Shewanella frigidimarina (strain NCIMB 400).